The primary structure comprises 147 residues: Large ribosomal subunit protein uL13 (147 aa).

The protein belongs to the universal ribosomal protein uL13 family. Part of the 50S ribosomal subunit.

Its function is as follows. This protein is one of the early assembly proteins of the 50S ribosomal subunit, although it is not seen to bind rRNA by itself. It is important during the early stages of 50S assembly. This is Large ribosomal subunit protein uL13 from Corynebacterium glutamicum (strain R).